Consider the following 60-residue polypeptide: Small ribosomal subunit protein bS21 (60 aa).

Residues 39–60 (ETPQEKRKRKAVARRRQRTRRR) are disordered. A compositionally biased stretch (basic residues) spans 44–60 (KRKRKAVARRRQRTRRR).

It belongs to the bacterial ribosomal protein bS21 family.

This is Small ribosomal subunit protein bS21 from Microcystis aeruginosa (strain NIES-843 / IAM M-2473).